The following is a 360-amino-acid chain: Peptide chain release factor 1 (360 aa).

Residue Q236 is modified to N5-methylglutamine. The interval 288-308 (QDEQDAERKSTIGTGDRSERI) is disordered. A compositionally biased stretch (basic and acidic residues) spans 293 to 308 (AERKSTIGTGDRSERI).

This sequence belongs to the prokaryotic/mitochondrial release factor family. In terms of processing, methylated by PrmC. Methylation increases the termination efficiency of RF1.

Its subcellular location is the cytoplasm. In terms of biological role, peptide chain release factor 1 directs the termination of translation in response to the peptide chain termination codons UAG and UAA. The protein is Peptide chain release factor 1 of Streptococcus equi subsp. equi (strain 4047).